The following is a 421-amino-acid chain: Ribulose bisphosphate carboxylase large chain (421 aa).

Positions 68 and 118 each coordinate substrate. Catalysis depends on lysine 120, which acts as the Proton acceptor. Lysine 122 is a substrate binding site. Mg(2+)-binding residues include lysine 146, aspartate 148, and glutamate 149. Lysine 146 is subject to N6-carboxylysine. Histidine 239 serves as the catalytic Proton acceptor. 3 residues coordinate substrate: arginine 240, histidine 272, and serine 324.

Belongs to the RuBisCO large chain family. Type I subfamily. As to quaternary structure, heterohexadecamer of 8 large chains and 8 small chains; disulfide-linked. The disulfide link is formed within the large subunit homodimers. Mg(2+) serves as cofactor. Post-translationally, the disulfide bond which can form in the large chain dimeric partners within the hexadecamer appears to be associated with oxidative stress and protein turnover.

It is found in the plastid. The protein resides in the chloroplast. The catalysed reaction is 2 (2R)-3-phosphoglycerate + 2 H(+) = D-ribulose 1,5-bisphosphate + CO2 + H2O. It carries out the reaction D-ribulose 1,5-bisphosphate + O2 = 2-phosphoglycolate + (2R)-3-phosphoglycerate + 2 H(+). RuBisCO catalyzes two reactions: the carboxylation of D-ribulose 1,5-bisphosphate, the primary event in carbon dioxide fixation, as well as the oxidative fragmentation of the pentose substrate in the photorespiration process. Both reactions occur simultaneously and in competition at the same active site. This Aegilops tauschii (Tausch's goatgrass) protein is Ribulose bisphosphate carboxylase large chain (rbcL).